The primary structure comprises 142 residues: ATP synthase epsilon chain (142 aa).

It belongs to the ATPase epsilon chain family. As to quaternary structure, F-type ATPases have 2 components, CF(1) - the catalytic core - and CF(0) - the membrane proton channel. CF(1) has five subunits: alpha(3), beta(3), gamma(1), delta(1), epsilon(1). CF(0) has three main subunits: a, b and c.

The protein resides in the cell inner membrane. Produces ATP from ADP in the presence of a proton gradient across the membrane. The chain is ATP synthase epsilon chain from Shewanella baltica (strain OS185).